The chain runs to 402 residues: Ferredoxin--NADP reductase (402 aa).

Residues 18–74 (NRLFIYEVVGLGGDGRNENSLVRKSGTTFITVPYARMNQEMQRITKLGGKIVSIRPA) enclose the CpcD-like domain. A disordered region spans residues 80–101 (IVSEGQSSAQASAQSPMASSTK). Over residues 85 to 99 (QSSAQASAQSPMASS) the composition is skewed to low complexity. One can recognise an FAD-binding FR-type domain in the interval 120 to 245 (KTPFLGKCIE…TGPVGKEMLL (126 aa)). FAD contacts are provided by residues 179-182 (RLYS), 200-202 (CVR), Tyr-206, 218-220 (VCS), and Thr-260. 2 residues coordinate NADP(+): Ser-182 and Arg-202. NADP(+) is bound by residues Thr-260, 292 to 293 (VP), 322 to 323 (SR), Lys-332, 332 to 336 (KVYVQ), 361 to 362 (GL), and Glu-400.

Belongs to the ferredoxin--NADP reductase type 1 family. FAD is required as a cofactor.

The protein localises to the cellular thylakoid membrane. The enzyme catalyses 2 reduced [2Fe-2S]-[ferredoxin] + NADP(+) + H(+) = 2 oxidized [2Fe-2S]-[ferredoxin] + NADPH. In Picosynechococcus sp. (strain ATCC 27264 / PCC 7002 / PR-6) (Agmenellum quadruplicatum), this protein is Ferredoxin--NADP reductase (petH).